We begin with the raw amino-acid sequence, 373 residues long: 1-deoxy-D-xylulose 5-phosphate reductoisomerase (373 aa).

6 residues coordinate NADPH: T10, G11, S12, I13, R37, and N112. K113 is a 1-deoxy-D-xylulose 5-phosphate binding site. E114 provides a ligand contact to NADPH. A Mn(2+)-binding site is contributed by D134. S135, E136, S160, and H183 together coordinate 1-deoxy-D-xylulose 5-phosphate. E136 is a Mn(2+) binding site. G189 is an NADPH binding site. Positions 196, 201, 202, and 205 each coordinate 1-deoxy-D-xylulose 5-phosphate. A Mn(2+)-binding site is contributed by E205.

This sequence belongs to the DXR family. Requires Mg(2+) as cofactor. Mn(2+) serves as cofactor.

The catalysed reaction is 2-C-methyl-D-erythritol 4-phosphate + NADP(+) = 1-deoxy-D-xylulose 5-phosphate + NADPH + H(+). The protein operates within isoprenoid biosynthesis; isopentenyl diphosphate biosynthesis via DXP pathway; isopentenyl diphosphate from 1-deoxy-D-xylulose 5-phosphate: step 1/6. Catalyzes the NADPH-dependent rearrangement and reduction of 1-deoxy-D-xylulose-5-phosphate (DXP) to 2-C-methyl-D-erythritol 4-phosphate (MEP). The polypeptide is 1-deoxy-D-xylulose 5-phosphate reductoisomerase (Persephonella marina (strain DSM 14350 / EX-H1)).